The chain runs to 257 residues: Methylthioribulose-1-phosphate dehydratase (257 aa).

Substrate is bound at residue Cys-107. His-125 and His-127 together coordinate Zn(2+). Glu-148 serves as the catalytic Proton donor/acceptor. His-210 is a Zn(2+) binding site.

It belongs to the aldolase class II family. MtnB subfamily. Requires Zn(2+) as cofactor.

The protein resides in the cytoplasm. It carries out the reaction 5-(methylsulfanyl)-D-ribulose 1-phosphate = 5-methylsulfanyl-2,3-dioxopentyl phosphate + H2O. The protein operates within amino-acid biosynthesis; L-methionine biosynthesis via salvage pathway; L-methionine from S-methyl-5-thio-alpha-D-ribose 1-phosphate: step 2/6. Catalyzes the dehydration of methylthioribulose-1-phosphate (MTRu-1-P) into 2,3-diketo-5-methylthiopentyl-1-phosphate (DK-MTP-1-P). The chain is Methylthioribulose-1-phosphate dehydratase from Lachancea thermotolerans (strain ATCC 56472 / CBS 6340 / NRRL Y-8284) (Yeast).